The primary structure comprises 658 residues: Exoribonuclease 2 (658 aa).

The RNB domain maps to 189-530 (REDLTSLYFT…VNHRLIKQVL (342 aa)). An S1 motif domain is found at 576–658 (AVEFDCEIAD…ETRSIVGNII (83 aa)).

It belongs to the RNR ribonuclease family. RNase II subfamily.

The protein localises to the cytoplasm. It carries out the reaction Exonucleolytic cleavage in the 3'- to 5'-direction to yield nucleoside 5'-phosphates.. Involved in mRNA degradation. Hydrolyzes single-stranded polyribonucleotides processively in the 3' to 5' direction. The polypeptide is Exoribonuclease 2 (Actinobacillus pleuropneumoniae serotype 3 (strain JL03)).